Consider the following 440-residue polypeptide: MNPSQILENLKKELSENEYENYLSNLKFNEKQSKADLLVFNAPNELMAKFIQTKYGKKIAHFYEVQSGNKAIINIQAQSAKQSNKSTKIDIAHIKAQSTILNPSFTFESFVVGDSNKYAYGACKAIAHKDKLGKLYNPIFVYGPTGLGKTHLLQAVGNASLEMGKKVIYATSENFINDFTSNLKNGSLDKFHEKYRNCDVLLIDDVQFLGKTDKIQEEFFFIFNEIKNNDGQIIMTSDNPPNMLKGITERLKSRFAHGIIADITPPQLDTKIAIIRKKCEFNDINLSNDIINYIATSLGDNIREIEGIIISLNAYATILGQEITLELAKSVMKDHIKEKKENITIDDILSLVCKEFNIKPSDVKSNKKTQNIVTARRIVIYLARALTALTMPQLANYFEMKDHTAISHNVKKITEMIENDASLKAKIEELKNKILVKSQS.

Positions 1–74 (MNPSQILENL…VQSGNKAIIN (74 aa)) are domain I, interacts with DnaA modulators. A domain II region spans residues 74–99 (NIQAQSAKQSNKSTKIDIAHIKAQST). The interval 100-316 (ILNPSFTFES…GIIISLNAYA (217 aa)) is domain III, AAA+ region. ATP-binding residues include Gly146, Gly148, Lys149, and Thr150. Positions 317 to 440 (TILGQEITLE…KNKILVKSQS (124 aa)) are domain IV, binds dsDNA.

It belongs to the DnaA family. Oligomerizes as a right-handed, spiral filament on DNA at oriC.

It localises to the cytoplasm. Functionally, plays an essential role in the initiation and regulation of chromosomal replication. ATP-DnaA binds to the origin of replication (oriC) to initiate formation of the DNA replication initiation complex once per cell cycle. Binds the DnaA box (a 9 base pair repeat at the origin) and separates the double-stranded (ds)DNA. Forms a right-handed helical filament on oriC DNA; dsDNA binds to the exterior of the filament while single-stranded (ss)DNA is stabiized in the filament's interior. The ATP-DnaA-oriC complex binds and stabilizes one strand of the AT-rich DNA unwinding element (DUE), permitting loading of DNA polymerase. After initiation quickly degrades to an ADP-DnaA complex that is not apt for DNA replication. Binds acidic phospholipids. The chain is Chromosomal replication initiator protein DnaA from Campylobacter jejuni subsp. jejuni serotype O:2 (strain ATCC 700819 / NCTC 11168).